A 113-amino-acid chain; its full sequence is Class I hydrophobin fvh1 (113 aa).

A signal peptide spans 1 to 20 (MVSFRAFTVAASLFATLAAA). Intrachain disulfides connect Cys34/Cys94, Cys41/Cys88, Cys42/Cys75, and Cys95/Cys108. Asn35 carries N-linked (GlcNAc...) asparagine glycosylation. Asn97 carries an N-linked (GlcNAc...) asparagine glycan.

It belongs to the fungal hydrophobin family. In terms of assembly, self-assembles to form functional amyloid fibrils called rodlets. Self-assembly into fibrillar rodlets occurs spontaneously at hydrophobic:hydrophilic interfaces and the rodlets further associate laterally to form amphipathic monolayers.

The protein localises to the secreted. The protein resides in the cell wall. Functionally, aerial growth, conidiation, and dispersal of filamentous fungi in the environment rely upon a capability of their secreting small amphipathic proteins called hydrophobins (HPBs) with low sequence identity. Class I can self-assemble into an outermost layer of rodlet bundles on aerial cell surfaces, conferring cellular hydrophobicity that supports fungal growth, development and dispersal; whereas Class II form highly ordered films at water-air interfaces through intermolecular interactions but contribute nothing to the rodlet structure. Fvh1 is a class I hydrophobin involved in fruiting body initiation. This Flammulina velutipes (Agaricus velutipes) protein is Class I hydrophobin fvh1.